A 129-amino-acid polypeptide reads, in one-letter code: MAGRKTTRKRRVRKNVESGVAHIHSTFNNTLVMITDPRGNAIAWSSAGALGFKGSRKSTPFAAQMAAEAAAKESMEHGMKSVEVAVKGPGSGREAAIRSLQATGLEVTAIRDVTPVPHNGSRPPKRRRV.

The protein belongs to the universal ribosomal protein uS11 family. Part of the 30S ribosomal subunit. Interacts with proteins S7 and S18. Binds to IF-3.

Located on the platform of the 30S subunit, it bridges several disparate RNA helices of the 16S rRNA. Forms part of the Shine-Dalgarno cleft in the 70S ribosome. This is Small ribosomal subunit protein uS11 from Lacticaseibacillus casei (strain BL23) (Lactobacillus casei).